The chain runs to 122 residues: Small ribosomal subunit protein uS13 (122 aa).

Positions 99–122 (RGQRTHTNARTRKGPAKAIAGKKK) are disordered.

Belongs to the universal ribosomal protein uS13 family. As to quaternary structure, part of the 30S ribosomal subunit. Forms a loose heterodimer with protein S19. Forms two bridges to the 50S subunit in the 70S ribosome.

Functionally, located at the top of the head of the 30S subunit, it contacts several helices of the 16S rRNA. In the 70S ribosome it contacts the 23S rRNA (bridge B1a) and protein L5 of the 50S subunit (bridge B1b), connecting the 2 subunits; these bridges are implicated in subunit movement. Contacts the tRNAs in the A and P-sites. In Rhizobium meliloti (strain 1021) (Ensifer meliloti), this protein is Small ribosomal subunit protein uS13.